The sequence spans 872 residues: Chaperone protein ClpB 2 (872 aa).

Residues 6–148 (PNQFTEKAWE…KNIIKQVRGS (143 aa)) enclose the Clp R domain. 2 repeat regions span residues 9-73 (FTEK…IQRQ) and 85-148 (LGRS…VRGS). An NBD1 region spans residues 161–342 (QSLEKYGRDL…RRFQQVYVDQ (182 aa)). Residue 208–215 (GEPGVGKT) coordinates ATP. Residues 343-551 (PSVEDTISIL…IAEIISKWTG (209 aa)) form a linker region. Residues 393–527 (IDLVDEAAAR…TERELSQTQG (135 aa)) adopt a coiled-coil conformation. An NBD2 region spans residues 561–772 (EKEKLLHLED…RIDEVIIFHS (212 aa)). 611 to 618 (GPTGVGKT) provides a ligand contact to ATP. A C-terminal region spans residues 773 to 872 (LDKKELRQIV…SRLPVEVFSS (100 aa)).

Belongs to the ClpA/ClpB family. As to quaternary structure, homohexamer. The oligomerization is ATP-dependent.

It localises to the cytoplasm. Part of a stress-induced multi-chaperone system, it is involved in the recovery of the cell from heat-induced damage, in cooperation with DnaK, DnaJ and GrpE. Acts before DnaK, in the processing of protein aggregates. Protein binding stimulates the ATPase activity; ATP hydrolysis unfolds the denatured protein aggregates, which probably helps expose new hydrophobic binding sites on the surface of ClpB-bound aggregates, contributing to the solubilization and refolding of denatured protein aggregates by DnaK. This is Chaperone protein ClpB 2 (clpB2) from Nostoc sp. (strain PCC 7120 / SAG 25.82 / UTEX 2576).